The primary structure comprises 93 residues: Ferredoxin-2 (93 aa).

The 2Fe-2S ferredoxin-type domain maps to 2–91 (YKVTLKTPDG…DVVIETHKED (90 aa)). 4 residues coordinate [2Fe-2S] cluster: cysteine 37, cysteine 42, cysteine 45, and cysteine 75.

Belongs to the 2Fe2S plant-type ferredoxin family. [2Fe-2S] cluster serves as cofactor.

The protein localises to the plastid. Its subcellular location is the chloroplast. Functionally, ferredoxins are iron-sulfur proteins that transfer electrons in a wide variety of metabolic reactions. This Equisetum arvense (Field horsetail) protein is Ferredoxin-2.